The chain runs to 320 residues: o-succinylbenzoate synthase (320 aa).

K133 functions as the Proton donor in the catalytic mechanism. Residues D161, E190, and D213 each contribute to the Mg(2+) site. Catalysis depends on K235, which acts as the Proton acceptor.

The protein belongs to the mandelate racemase/muconate lactonizing enzyme family. MenC type 1 subfamily. A divalent metal cation serves as cofactor.

The enzyme catalyses (1R,6R)-6-hydroxy-2-succinyl-cyclohexa-2,4-diene-1-carboxylate = 2-succinylbenzoate + H2O. It functions in the pathway quinol/quinone metabolism; 1,4-dihydroxy-2-naphthoate biosynthesis; 1,4-dihydroxy-2-naphthoate from chorismate: step 4/7. It participates in quinol/quinone metabolism; menaquinone biosynthesis. Functionally, converts 2-succinyl-6-hydroxy-2,4-cyclohexadiene-1-carboxylate (SHCHC) to 2-succinylbenzoate (OSB). The sequence is that of o-succinylbenzoate synthase from Salmonella paratyphi C (strain RKS4594).